A 637-amino-acid chain; its full sequence is Threonine--tRNA ligase (637 aa).

The TGS domain maps to 1 to 61; it reads MITITLPDSS…ATDAAVRLIT (61 aa). The segment at 238–528 is catalytic; the sequence is DHRKLGAELD…LIEHFAGKFP (291 aa). Zn(2+) contacts are provided by Cys329, His380, and His505.

This sequence belongs to the class-II aminoacyl-tRNA synthetase family. In terms of assembly, homodimer. Zn(2+) serves as cofactor.

Its subcellular location is the cytoplasm. It catalyses the reaction tRNA(Thr) + L-threonine + ATP = L-threonyl-tRNA(Thr) + AMP + diphosphate + H(+). Catalyzes the attachment of threonine to tRNA(Thr) in a two-step reaction: L-threonine is first activated by ATP to form Thr-AMP and then transferred to the acceptor end of tRNA(Thr). Also edits incorrectly charged L-seryl-tRNA(Thr). The chain is Threonine--tRNA ligase from Desulfosudis oleivorans (strain DSM 6200 / JCM 39069 / Hxd3) (Desulfococcus oleovorans).